The following is a 1424-amino-acid chain: S-layer protein A (1424 aa).

A signal peptide spans 1-24 (MNKLVGLLVSSLFLASILIGIAPA). 28 N-linked (GlcNAc...) asparagine glycosylation sites follow: Asn60, Asn70, Asn276, Asn295, Asn342, Asn358, Asn377, Asn468, Asn517, Asn545, Asn559, Asn581, Asn633, Asn714, Asn875, Asn914, Asn955, Asn989, Asn1018, Asn1042, Asn1093, Asn1134, Asn1197, Asn1217, Asn1252, Asn1276, Asn1304, and Asn1419.

The protein belongs to the Sulfolobales SlaA family. In terms of assembly, the mushroom-shaped unit cells of the Sulfolobales' S-layers may consist of three SlaB subunits and six SlaA subunits. In terms of processing, glycosylated. C-terminal glycosylation sites are modified with a heterogeneous family of glycans, with the largest having a composition Glc(1)Man(2)GlcNAc(2) plus 6-sulfoquinovose (QuiS).

It is found in the secreted. It localises to the cell wall. The protein localises to the S-layer. In terms of biological role, S-layer large protein. May form the highly ordered outer sheath. The sequence is that of S-layer protein A from Sulfolobus acidocaldarius (strain ATCC 33909 / DSM 639 / JCM 8929 / NBRC 15157 / NCIMB 11770).